The chain runs to 346 residues: Methylthioribose-1-phosphate isomerase (346 aa).

Substrate is bound by residues 45 to 47 (RGA), Arg-87, and Gln-194. Asp-235 functions as the Proton donor in the catalytic mechanism. 245 to 246 (NK) is a substrate binding site.

It belongs to the eIF-2B alpha/beta/delta subunits family. MtnA subfamily.

The catalysed reaction is 5-(methylsulfanyl)-alpha-D-ribose 1-phosphate = 5-(methylsulfanyl)-D-ribulose 1-phosphate. The protein operates within amino-acid biosynthesis; L-methionine biosynthesis via salvage pathway; L-methionine from S-methyl-5-thio-alpha-D-ribose 1-phosphate: step 1/6. Its function is as follows. Catalyzes the interconversion of methylthioribose-1-phosphate (MTR-1-P) into methylthioribulose-1-phosphate (MTRu-1-P). The sequence is that of Methylthioribose-1-phosphate isomerase from Syntrophomonas wolfei subsp. wolfei (strain DSM 2245B / Goettingen).